The chain runs to 307 residues: Serine/threonine-protein phosphatase 4 catalytic subunit (307 aa).

Mn(2+) is bound by residues Asp54, His56, Asp82, and Asn114. His115 (proton donor) is an active-site residue. Residues His164 and His238 each contribute to the Mn(2+) site. Leu307 is modified (leucine methyl ester).

This sequence belongs to the PPP phosphatase family. PP-4 (PP-X) subfamily. Serine/threonine-protein phosphatase 4 (PP4) occurs in different assemblies of the catalytic and one or more regulatory subunits. The cofactor is Mn(2+).

Its subcellular location is the cytoplasm. The protein localises to the nucleus. It localises to the cytoskeleton. The protein resides in the microtubule organizing center. It is found in the centrosome. It catalyses the reaction O-phospho-L-seryl-[protein] + H2O = L-seryl-[protein] + phosphate. It carries out the reaction O-phospho-L-threonyl-[protein] + H2O = L-threonyl-[protein] + phosphate. In terms of biological role, protein phosphatase that regulates many processes such as microtubule organization at centrosomes. This is Serine/threonine-protein phosphatase 4 catalytic subunit (ppp4c) from Xenopus laevis (African clawed frog).